A 95-amino-acid polypeptide reads, in one-letter code: Mitochondrial import inner membrane translocase subunit Tim9 (95 aa).

The Twin CX3C motif motif lies at 35–59 (CFTDCIRDFTTRDVKDSEEKCSLNC). 2 disulfides stabilise this stretch: cysteine 35–cysteine 59 and cysteine 39–cysteine 55.

This sequence belongs to the small Tim family. Heterohexamer; composed of 3 copies of Tim9 and 3 copies of Tim10, named soluble 70 kDa complex. The complex associates with the Tim22 component of the TIM22 complex. Interacts with multi-pass transmembrane proteins in transit.

Its subcellular location is the mitochondrion inner membrane. In terms of biological role, mitochondrial intermembrane chaperone that participates in the import and insertion of multi-pass transmembrane proteins into the mitochondrial inner membrane. May also be required for the transfer of beta-barrel precursors from the TOM complex to the sorting and assembly machinery (SAM complex) of the outer membrane. Acts as a chaperone-like protein that protects the hydrophobic precursors from aggregation and guide them through the mitochondrial intermembrane space. The chain is Mitochondrial import inner membrane translocase subunit Tim9 (Tim9a) from Drosophila melanogaster (Fruit fly).